A 168-amino-acid polypeptide reads, in one-letter code: DAZ-associated protein 2 (168 aa).

The span at 1–13 (MNSKGQYPTQPTY) shows a compositional bias: low complexity. Residues 1–25 (MNSKGQYPTQPTYPVQPPGNPVYPQ) form a disordered region. Positions 39–42 (PPAY) match the PPAY motif. Ser77 carries the post-translational modification Phosphoserine.

Interacts with SOX6. Interacts with DAZ1 and DAZL. Interacts with IL17RB. May interact with FAM168B. Interacts with INCA1. Interacts with EIF4G1 and EIF4G2. Interacts (via PPAY motif) with NEDD4 (via WW domains). Interacts with transcription factor TCF4; the interaction results in localization of DAZAP2 to the nucleus. Interacts with transcription factors TCF7 and TCF7L1. Interacts with transcription factor LEF1. Interacts with serine/threonine-protein kinase HIPK2; the interaction results in phosphorylation of DAZAP2 which causes localization of DAZAP2 to the nucleus, reduces interaction of DAZAP2 with HIPK2 and prevents DAZAP2-dependent degradation of HIPK2. Interacts with ubiquitin ligase SIAH1; the interaction is decreased following phosphorylation of DAZAP2 by HIPK2. Interacts with TP53; the interaction is triggered by DNA damage. Ubiquitinated by SMURF2, leading to proteasomal degradation. Ubiquitinated by NEDD4, leading to proteasomal degradation. In terms of processing, following DNA damage, phosphorylated by HIPK2 which promotes DAZAP2 localization to the nucleus, reduces interaction of DAZAP2 with HIPK2 and SIAH1, and prevents DAZAP2-dependent ubiquitination of HIPK2 by E3 ubiquitin-protein ligase SIAH1 and subsequent HIPK2 proteasomal degradation.

It is found in the cytoplasm. The protein localises to the nucleus. Its subcellular location is the nucleus speckle. The protein resides in the nuclear body. It localises to the stress granule. In unstressed cells, promotes SIAH1-mediated polyubiquitination and degradation of the serine/threonine-protein kinase HIPK2, probably by acting as a loading factor that potentiates complex formation between HIPK2 and ubiquitin ligase SIAH1. In response to DNA damage, localizes to the nucleus following phosphorylation by HIPK2 and modulates the expression of a subset of TP53/p53 target genes by binding to TP53 at target gene promoters. This limits the expression of a number of cell death-mediating TP53 target genes, reducing DNA damage-induced cell death. Enhances the binding of transcription factor TCF7L2/TCF4, a Wnt signaling pathway effector, to the promoters of target genes. Plays a role in stress granule formation. The polypeptide is DAZ-associated protein 2 (Rattus norvegicus (Rat)).